Here is a 108-residue protein sequence, read N- to C-terminus: uncharacterized protein (108 aa).

Residues 1–22 (MMIKQCVICLSLLVFGTTAAHA) form the signal peptide.

This is an uncharacterized protein from Bacillus subtilis (strain 168).